The primary structure comprises 349 residues: Uroporphyrinogen decarboxylase (349 aa).

Substrate is bound by residues 23–27, Asp71, Tyr148, Ser203, and His317; that span reads RQAGR.

The protein belongs to the uroporphyrinogen decarboxylase family. As to quaternary structure, homodimer.

The protein resides in the cytoplasm. The catalysed reaction is uroporphyrinogen III + 4 H(+) = coproporphyrinogen III + 4 CO2. It participates in porphyrin-containing compound metabolism; protoporphyrin-IX biosynthesis; coproporphyrinogen-III from 5-aminolevulinate: step 4/4. In terms of biological role, catalyzes the decarboxylation of four acetate groups of uroporphyrinogen-III to yield coproporphyrinogen-III. In Sorangium cellulosum (strain So ce56) (Polyangium cellulosum (strain So ce56)), this protein is Uroporphyrinogen decarboxylase.